A 259-amino-acid polypeptide reads, in one-letter code: MLLNIANLVGKHTIKFAQSVGIFALFSFIAISSIIKPPLYLSLIMRQLLFIGFHSLPVVAMTTFFSGAVLALQSYTGFSRFSAENSIATVVVLSLTRELGPVLAGLIVAGRVGASIAAEIATMKVTEQVDALYTLSTDPIKYLVCPRVIAAIITMPCLVLIGDVIGVMGGYLVGIYKLNFNSTAYLTSTFQYLELIDVISGLVKATVFGFIISIISCYSGYYSGKGAKGVGRATTSAVVNSSILILISNYLITELLFKV.

A run of 5 helical transmembrane segments spans residues 20 to 40 (VGIF…PPLY), 49 to 69 (LFIG…SGAV), 148 to 168 (VIAA…IGVM), 195 to 215 (LIDV…ISII), and 237 to 257 (AVVN…ELLF).

It belongs to the MlaE permease family.

Its subcellular location is the cell inner membrane. Could be part of an ABC transporter complex. The protein is Probable ABC transporter permease protein RT0041 of Rickettsia typhi (strain ATCC VR-144 / Wilmington).